We begin with the raw amino-acid sequence, 444 residues long: MNHSRSHALFVQAQTRIPGGVNSPVRAFRSVGGEPFFVARADGPYLFDVDGHRYIDYVGSWGPMIVGHNHPAVREAVQVAISNGLSYGAPCAAEVTMAETIARLVPSCEMVRMVNSGTEATLSAIRLARGATGRNYIVKFEGCYHGHGDSFLVKGGSGMLTLGIPSSPGVPAELSKLTITLTYNDFDAATALFEEMGHHIAAVIVEPVIGNANCIPPQPGYLQHLRTLCTQYAVLLIFDEVMTGFRVALGGAQALYGVTPDLTTFGKIIGGGMPVGAYGGRRDLMQHIAPTGPIYQAGTLSGNPVAMAAGLAMLELIQAPDFYTHLSNAAAALCTGLQQAASQAGIAMTTQQIGGMFGLFFTDQQVETYAQATACNTDRFNRFFHAMLQRGVFFAPSAYEAGFISSAHSPNIIETTLEAARTAFQTIANEAAILSKSETPIKMR.

Lys267 carries the post-translational modification N6-(pyridoxal phosphate)lysine.

The protein belongs to the class-III pyridoxal-phosphate-dependent aminotransferase family. HemL subfamily. In terms of assembly, homodimer. It depends on pyridoxal 5'-phosphate as a cofactor.

It localises to the cytoplasm. It carries out the reaction (S)-4-amino-5-oxopentanoate = 5-aminolevulinate. The protein operates within porphyrin-containing compound metabolism; protoporphyrin-IX biosynthesis; 5-aminolevulinate from L-glutamyl-tRNA(Glu): step 2/2. In Xylella fastidiosa (strain Temecula1 / ATCC 700964), this protein is Glutamate-1-semialdehyde 2,1-aminomutase.